The sequence spans 379 residues: Putative nickel insertion protein (379 aa).

It belongs to the LarC family.

This chain is Putative nickel insertion protein, found in Methanocaldococcus jannaschii (strain ATCC 43067 / DSM 2661 / JAL-1 / JCM 10045 / NBRC 100440) (Methanococcus jannaschii).